A 267-amino-acid chain; its full sequence is Mediator of RNA polymerase II transcription subunit 8 (267 aa).

Coiled-coil stretches lie at residues 1–26 (MQRE…KNSL) and 116–160 (DVEE…EERE). Residues 190 to 267 (GLSNRRPPGQ…KSASMHPYQR (78 aa)) are disordered. Positions 227-245 (PPNQQQQHMAGVSMSQGSQ) are enriched in polar residues.

Belongs to the Mediator complex subunit 8 family. Component of the Mediator complex. May be part of a multisubunit E3 ubiquitin-protein ligase complex.

The protein resides in the nucleus. Its pathway is protein modification; protein ubiquitination. In terms of biological role, component of the Mediator complex, a coactivator involved in the regulated transcription of nearly all RNA polymerase II-dependent genes. Mediator functions as a bridge to convey information from gene-specific regulatory proteins to the basal RNA polymerase II transcription machinery. Mediator is recruited to promoters by direct interactions with regulatory proteins and serves as a scaffold for the assembly of a functional preinitiation complex with RNA polymerase II and the general transcription factors. May play a role as a target recruitment subunit in E3 ubiquitin-protein ligase complexes and thus in ubiquitination and subsequent proteasomal degradation of target proteins. In Xenopus tropicalis (Western clawed frog), this protein is Mediator of RNA polymerase II transcription subunit 8 (med8).